The following is a 330-amino-acid chain: Malate dehydrogenase (330 aa).

NAD(+) is bound at residue 15–21 (GAGGQIG). Substrate is bound by residues Arg-95 and Arg-101. NAD(+) is bound by residues Asn-108, Gln-115, and 132 to 134 (VGN). Residues Asn-134 and Arg-165 each contribute to the substrate site. His-190 serves as the catalytic Proton acceptor.

Belongs to the LDH/MDH superfamily. MDH type 2 family.

It carries out the reaction (S)-malate + NAD(+) = oxaloacetate + NADH + H(+). Functionally, catalyzes the reversible oxidation of malate to oxaloacetate. The chain is Malate dehydrogenase from Corynebacterium jeikeium (strain K411).